Here is a 379-residue protein sequence, read N- to C-terminus: MTAEHFPVTELAKDLISRPSVTPLDEGCQTLMAERLSAIGFNIEPMIFEDTTNMWARRGNQGPVFCFAGHTDVVPTGDISRWHTPPFEPTIIDGYLYGRGAADMKGSLAAMIVATERFVTKHPDHQGSIAFLITSDEEGPFINGTTRVIDTLEARKEKITWALVGEPSSTLKLGDVVKNGRRGSLTGNLTIKGIQGHVAYPHLADNPIHKAAPFLAELSQMHWDNGNEFFPPTSMQIANIHGGTGASNVIPGALEVMFNFRYSTEVTAEILIERVEALLKAHELDYDISWIFNGLPFLTGDGPLLDATRYAIHQVTGYDTSPQTTGGTSDGRFIAPTGAKVLELGPVNATIHKVNECVKVDDLEQLALCYEVILEQLLC.

H70 contributes to the Zn(2+) binding site. D72 is a catalytic residue. D103 is a Zn(2+) binding site. The active-site Proton acceptor is E137. 3 residues coordinate Zn(2+): E138, E166, and H352.

This sequence belongs to the peptidase M20A family. DapE subfamily. In terms of assembly, homodimer. Zn(2+) is required as a cofactor. Co(2+) serves as cofactor.

It catalyses the reaction N-succinyl-(2S,6S)-2,6-diaminopimelate + H2O = (2S,6S)-2,6-diaminopimelate + succinate. Its pathway is amino-acid biosynthesis; L-lysine biosynthesis via DAP pathway; LL-2,6-diaminopimelate from (S)-tetrahydrodipicolinate (succinylase route): step 3/3. Functionally, catalyzes the hydrolysis of N-succinyl-L,L-diaminopimelic acid (SDAP), forming succinate and LL-2,6-diaminopimelate (DAP), an intermediate involved in the bacterial biosynthesis of lysine and meso-diaminopimelic acid, an essential component of bacterial cell walls. This Shewanella sp. (strain W3-18-1) protein is Succinyl-diaminopimelate desuccinylase.